Reading from the N-terminus, the 189-residue chain is Crossover junction endodeoxyribonuclease RuvC (189 aa).

Residues D7, E68, and D141 contribute to the active site. Mg(2+)-binding residues include D7, E68, and D141.

Belongs to the RuvC family. Homodimer which binds Holliday junction (HJ) DNA. The HJ becomes 2-fold symmetrical on binding to RuvC with unstacked arms; it has a different conformation from HJ DNA in complex with RuvA. In the full resolvosome a probable DNA-RuvA(4)-RuvB(12)-RuvC(2) complex forms which resolves the HJ. Mg(2+) is required as a cofactor.

It is found in the cytoplasm. The enzyme catalyses Endonucleolytic cleavage at a junction such as a reciprocal single-stranded crossover between two homologous DNA duplexes (Holliday junction).. The RuvA-RuvB-RuvC complex processes Holliday junction (HJ) DNA during genetic recombination and DNA repair. Endonuclease that resolves HJ intermediates. Cleaves cruciform DNA by making single-stranded nicks across the HJ at symmetrical positions within the homologous arms, yielding a 5'-phosphate and a 3'-hydroxyl group; requires a central core of homology in the junction. The consensus cleavage sequence is 5'-(A/T)TT(C/G)-3'. Cleavage occurs on the 3'-side of the TT dinucleotide at the point of strand exchange. HJ branch migration catalyzed by RuvA-RuvB allows RuvC to scan DNA until it finds its consensus sequence, where it cleaves and resolves the cruciform DNA. This Rhodococcus opacus (strain B4) protein is Crossover junction endodeoxyribonuclease RuvC.